A 321-amino-acid polypeptide reads, in one-letter code: p-hydroxybenzoic acid efflux pump subunit AaeA (321 aa).

The helical transmembrane segment at 22-42 (VVITLVIVLCAIVAIFRVWAF) threads the bilayer.

It belongs to the membrane fusion protein (MFP) (TC 8.A.1) family.

The protein resides in the cell inner membrane. Its function is as follows. Forms an efflux pump with AaeB. The sequence is that of p-hydroxybenzoic acid efflux pump subunit AaeA from Pectobacterium atrosepticum (strain SCRI 1043 / ATCC BAA-672) (Erwinia carotovora subsp. atroseptica).